Here is an 86-residue protein sequence, read N- to C-terminus: Large ribosomal subunit protein uL23 (86 aa).

Belongs to the universal ribosomal protein uL23 family. As to quaternary structure, part of the 50S ribosomal subunit. Contacts protein L29.

Its function is as follows. Binds to 23S rRNA. One of the proteins that surrounds the polypeptide exit tunnel on the outside of the ribosome. The chain is Large ribosomal subunit protein uL23 from Methanococcus maripaludis (strain C5 / ATCC BAA-1333).